Here is a 307-residue protein sequence, read N- to C-terminus: Taste receptor type 2 member 41 (307 aa).

The Extracellular segment spans residues 1-7 (MQAALTA). The chain crosses the membrane as a helical span at residues 8–28 (FFMLFFSLLSLLGIAANGFIV). Residues 29–40 (LVLGREWLQYGR) are Cytoplasmic-facing. Residues 41 to 61 (LLPLDMILISLGVSRFCLQLV) form a helical membrane-spanning segment. The Extracellular segment spans residues 62–88 (GTVYNFYYSAHKVEYSGGLSRQFFHLH). A helical membrane pass occupies residues 89 to 109 (WHFLNLATFXFCSWLSVLFCV). At 110-129 (KXANITHPTFLWLKWRFPGW) the chain is on the cytoplasmic side. A helical membrane pass occupies residues 130–150 (VPWLLLGSVLISFIITLLLFW). The Extracellular segment spans residues 151–183 (VNYPVYQEFLIRKFSGNMTYEWNTRIEMYYLPS). An N-linked (GlcNAc...) asparagine glycan is attached at N167. A helical membrane pass occupies residues 184-204 (LKLVIWSIPCSVFLVSIMLLI). Over 205–234 (NSLRRHTWRMQHNGHSLQDPSTQAHTRAXK) the chain is Cytoplasmic. The chain crosses the membrane as a helical span at residues 235–255 (SLISFLILYVLSFLSLIIDAT). Topologically, residues 256–264 (KFISMQNDF) are extracellular. Residues 265–285 (YWPWQTAVYLGVSVHPFILIF) form a helical membrane-spanning segment. Residues 286–307 (SNLKLRSVFWKLLLLARGFWVA) lie on the Cytoplasmic side of the membrane.

Belongs to the G-protein coupled receptor T2R family.

It is found in the membrane. Receptor that may play a role in the perception of bitterness and is gustducin-linked. May play a role in sensing the chemical composition of the gastrointestinal content. The activity of this receptor may stimulate alpha gustducin, mediate PLC-beta-2 activation and lead to the gating of TRPM5. The chain is Taste receptor type 2 member 41 (TAS2R41) from Pongo pygmaeus (Bornean orangutan).